A 482-amino-acid chain; its full sequence is tRNA sulfurtransferase (482 aa).

The THUMP domain maps to 61 to 165 (DLVRDALTRI…DDRLLLVRGR (105 aa)). Residues 183–184 (LI), K265, G287, and Q296 each bind ATP. The cysteines at positions 344 and 456 are disulfide-linked. A Rhodanese domain is found at 404–482 (LAEGDVVLDI…GYDNVRVYRP (79 aa)). C456 acts as the Cysteine persulfide intermediate in catalysis.

Belongs to the ThiI family.

It is found in the cytoplasm. It carries out the reaction [ThiI sulfur-carrier protein]-S-sulfanyl-L-cysteine + a uridine in tRNA + 2 reduced [2Fe-2S]-[ferredoxin] + ATP + H(+) = [ThiI sulfur-carrier protein]-L-cysteine + a 4-thiouridine in tRNA + 2 oxidized [2Fe-2S]-[ferredoxin] + AMP + diphosphate. It catalyses the reaction [ThiS sulfur-carrier protein]-C-terminal Gly-Gly-AMP + S-sulfanyl-L-cysteinyl-[cysteine desulfurase] + AH2 = [ThiS sulfur-carrier protein]-C-terminal-Gly-aminoethanethioate + L-cysteinyl-[cysteine desulfurase] + A + AMP + 2 H(+). The protein operates within cofactor biosynthesis; thiamine diphosphate biosynthesis. Its function is as follows. Catalyzes the ATP-dependent transfer of a sulfur to tRNA to produce 4-thiouridine in position 8 of tRNAs, which functions as a near-UV photosensor. Also catalyzes the transfer of sulfur to the sulfur carrier protein ThiS, forming ThiS-thiocarboxylate. This is a step in the synthesis of thiazole, in the thiamine biosynthesis pathway. The sulfur is donated as persulfide by IscS. This Edwardsiella ictaluri (strain 93-146) protein is tRNA sulfurtransferase.